A 176-amino-acid polypeptide reads, in one-letter code: Probable DNA-directed RNA polymerase subunit delta (176 aa).

An HTH HARE-type domain is found at 14–81 (CSMIEVVHSV…GENRWGLRSW (68 aa)). Positions 91–176 (ILPQPKPKKK…ETEEEEEEEL (86 aa)) are disordered. The segment covering 106–176 (DGFDDYIEED…ETEEEEEEEL (71 aa)) has biased composition (acidic residues).

This sequence belongs to the RpoE family. RNAP is composed of a core of 2 alpha, a beta and a beta' subunits. The core is associated with a delta subunit and one of several sigma factors.

Functionally, participates in both the initiation and recycling phases of transcription. In the presence of the delta subunit, RNAP displays an increased specificity of transcription, a decreased affinity for nucleic acids, and an increased efficiency of RNA synthesis because of enhanced recycling. This Bacillus thuringiensis (strain Al Hakam) protein is Probable DNA-directed RNA polymerase subunit delta.